We begin with the raw amino-acid sequence, 444 residues long: 1,4-beta-D-glucan glucohydrolase (444 aa).

Glu164 serves as the catalytic Proton donor. Glu349 serves as the catalytic Nucleophile.

Belongs to the glycosyl hydrolase 1 family. Monomer.

It catalyses the reaction Hydrolysis of (1-&gt;4)-linkages in (1-&gt;4)-beta-D-glucans, to remove successive glucose units.. The enzyme catalyses Hydrolysis of terminal, non-reducing beta-D-glucosyl residues with release of beta-D-glucose.. The protein operates within glycan metabolism; cellulose degradation. It functions in the pathway glycan metabolism; beta-D-glucan degradation. With respect to regulation, activated by glucose up to 200 mM when p-nitrophenyl-beta-glucoside is used as the substrate. This activation by end product concentrations may be due to a transglycosylation activity of the enzyme. Its function is as follows. Broad substrate specificity glycosidase. Releases glucose from soluble glucooligomers, with a preference for longer oligomers; acts more readily on cellotetraose than on cellobiose. Displays similar activities towards the disaccharides lactose and cellobiose. Is also able to hydrolyze various aryl-beta-glycosides in vitro. This is 1,4-beta-D-glucan glucohydrolase from Thermotoga neapolitana (strain ATCC 49049 / DSM 4359 / NBRC 107923 / NS-E).